The sequence spans 388 residues: Palmitoyltransferase ZDHHC18-B (388 aa).

The tract at residues 1–33 (MKNREYQQIDPQALATPTPTPPPRSLPEHKPRR) is disordered. Residues 1–58 (MKNREYQQIDPQALATPTPTPPPRSLPEHKPRRARRKWEVFPGKNRFYCDGRIIVARQ) are Cytoplasmic-facing. The helical transmembrane segment at 59–79 (SGVLPLTLGLILLTSGLFFIF) threads the bilayer. The Lumenal segment spans residues 80–87 (DCPFLVKH). The helical transmembrane segment at 88–108 (LTSCIPAIGGVLFVFVIISLL) threads the bilayer. The Cytoplasmic portion of the chain corresponds to 109-205 (QTSFTDPGIL…GNCVGKRNYR (97 aa)). The DHHC domain maps to 162 to 212 (KYCFTCKIFRPPRTSHCSLCDNCVERFDHHCPWVGNCVGKRNYRFFYTFIV). The active-site S-palmitoyl cysteine intermediate is cysteine 192. The helical transmembrane segment at 206–226 (FFYTFIVSLSFLTAFIFGCVT) threads the bilayer. The Lumenal portion of the chain corresponds to 227–253 (THLALRSQGGNGLVNALQSSPASALEL). Residues 254–274 (VVCFFSVWSILGLSGFHTYLV) traverse the membrane as a helical segment. Residues 275 to 388 (AANLTTNEDI…AISMQNHSTA (114 aa)) lie on the Cytoplasmic side of the membrane.

It belongs to the DHHC palmitoyltransferase family. ERF2/ZDHHC9 subfamily.

The protein localises to the golgi apparatus membrane. It catalyses the reaction L-cysteinyl-[protein] + hexadecanoyl-CoA = S-hexadecanoyl-L-cysteinyl-[protein] + CoA. Its function is as follows. Palmitoyltransferase that catalyzes the addition of palmitate onto various protein substrates, such as CGAS, HRAS and LCK. The polypeptide is Palmitoyltransferase ZDHHC18-B (Danio rerio (Zebrafish)).